A 342-amino-acid polypeptide reads, in one-letter code: Cytosolic Fe-S cluster assembly factor NBP35 (342 aa).

The tract at residues 16 to 42 (SKAAPKLVAPEPEHCPGPESEQAGKGD) is disordered. [4Fe-4S] cluster-binding residues include cysteine 30, cysteine 44, cysteine 47, and cysteine 53. Residue 83-90 (GKGGVGKS) participates in ATP binding. Cysteine 256 and cysteine 259 together coordinate [4Fe-4S] cluster.

Belongs to the Mrp/NBP35 ATP-binding proteins family. NUBP1/NBP35 subfamily. In terms of assembly, heterotetramer of 2 NBP35 and 2 CFD1 chains. [4Fe-4S] cluster serves as cofactor.

The protein localises to the cytoplasm. Component of the cytosolic iron-sulfur (Fe/S) protein assembly (CIA) machinery. Required for maturation of extramitochondrial Fe-S proteins. The NBP35-CFD1 heterotetramer forms a Fe-S scaffold complex, mediating the de novo assembly of an Fe-S cluster and its transfer to target apoproteins. This chain is Cytosolic Fe-S cluster assembly factor NBP35, found in Coccidioides immitis (strain RS) (Valley fever fungus).